We begin with the raw amino-acid sequence, 242 residues long: UPF0246 protein SP70585_1589 (242 aa).

It belongs to the UPF0246 family.

The polypeptide is UPF0246 protein SP70585_1589 (Streptococcus pneumoniae (strain 70585)).